We begin with the raw amino-acid sequence, 152 residues long: Regulatory protein RecX (152 aa).

The protein belongs to the RecX family.

The protein resides in the cytoplasm. In terms of biological role, modulates RecA activity. This Haemophilus influenzae (strain PittEE) protein is Regulatory protein RecX.